The primary structure comprises 98 residues: Integration host factor subunit alpha (98 aa).

The disordered stretch occupies residues 54-74 (LRDKSSRPGRNPKTGESVPVS).

This sequence belongs to the bacterial histone-like protein family. In terms of assembly, heterodimer of an alpha and a beta chain.

Its function is as follows. This protein is one of the two subunits of integration host factor, a specific DNA-binding protein that functions in genetic recombination as well as in transcriptional and translational control. The chain is Integration host factor subunit alpha (ihfA) from Pasteurella multocida (strain Pm70).